We begin with the raw amino-acid sequence, 189 residues long: MTEYKLVVVGAGGVGKSALTIQLIQNHFVDEYDPTIEDSYRKQVVIDGETCLLDILDTAGQEEYSAMRDQYMRTGEGFLCVFAINNTKSFEDIHQYREQIKRVKDSDDVPMVLVGNKCDLPARTVETRQAQDLARSYGIPYIETSAKTRQGVEDAFYTLVREIRQHKLRKLNPPDESGPGCMNCKCVIS.

Met-1 is modified (N-acetylmethionine). Residue Thr-2 is modified to N-acetylthreonine; in GTPase HRas, N-terminally processed. GTP is bound at residue 10–17 (GAGGVGKS). Residues 32-40 (YDPTIEDSY) carry the Effector region motif. Residues 57 to 61 (DTAGQ) and 116 to 119 (NKCD) contribute to the GTP site. Cys-118 bears the S-nitrosocysteine mark. Residues 166-185 (HKLRKLNPPDESGPGCMNCK) form a hypervariable region region. S-palmitoyl cysteine attachment occurs at residues Cys-181 and Cys-184. At Cys-186 the chain carries Cysteine methyl ester. Cys-186 carries S-farnesyl cysteine lipidation. Residues 187–189 (VIS) constitute a propeptide, removed in mature form.

It belongs to the small GTPase superfamily. Ras family. Post-translationally, palmitoylated by the ZDHHC9-GOLGA7 complex. A continuous cycle of de- and re-palmitoylation regulates rapid exchange between plasma membrane and Golgi.

It localises to the cell membrane. It is found in the golgi apparatus membrane. It carries out the reaction GTP + H2O = GDP + phosphate + H(+). Its activity is regulated as follows. Alternates between an inactive form bound to GDP and an active form bound to GTP. Activated by a guanine nucleotide-exchange factor (GEF) and inactivated by a GTPase-activating protein (GAP). Ras proteins bind GDP/GTP and possess intrinsic GTPase activity. The polypeptide is GTPase HRas (HRAS) (Gallus gallus (Chicken)).